A 156-amino-acid polypeptide reads, in one-letter code: ATP synthase subunit b (156 aa).

The chain crosses the membrane as a helical span at residues 7-27 (FFAQMVVFFILWWVVAKFIWP).

It belongs to the ATPase B chain family. In terms of assembly, F-type ATPases have 2 components, F(1) - the catalytic core - and F(0) - the membrane proton channel. F(1) has five subunits: alpha(3), beta(3), gamma(1), delta(1), epsilon(1). F(0) has three main subunits: a(1), b(2) and c(10-14). The alpha and beta chains form an alternating ring which encloses part of the gamma chain. F(1) is attached to F(0) by a central stalk formed by the gamma and epsilon chains, while a peripheral stalk is formed by the delta and b chains.

The protein localises to the cell inner membrane. F(1)F(0) ATP synthase produces ATP from ADP in the presence of a proton or sodium gradient. F-type ATPases consist of two structural domains, F(1) containing the extramembraneous catalytic core and F(0) containing the membrane proton channel, linked together by a central stalk and a peripheral stalk. During catalysis, ATP synthesis in the catalytic domain of F(1) is coupled via a rotary mechanism of the central stalk subunits to proton translocation. In terms of biological role, component of the F(0) channel, it forms part of the peripheral stalk, linking F(1) to F(0). This Cupriavidus metallidurans (strain ATCC 43123 / DSM 2839 / NBRC 102507 / CH34) (Ralstonia metallidurans) protein is ATP synthase subunit b.